The chain runs to 292 residues: mRNA export protein 33 (292 aa).

The interval 1–76 (MPPKKAAKGK…RKRREEEKRA (76 aa)) is disordered. Composition is skewed to basic and acidic residues over residues 9 to 26 (GKGDPGKAAKKDPTKKAA) and 58 to 76 (KDAKRQEALRKRREEEKRA). Residues 134 to 172 (INTDIVCKFFLEACETGKYGWLWQCPNGNMTCIYKHALP) form a C3H1-type zinc finger.

It is found in the cytoplasm. In terms of biological role, functions as a component of the nuclear pore complex (NPC). NPC components, collectively referred to as nucleoporins (NUPs), can play the role of both NPC structural components and of docking or interaction partners for transiently associated nuclear transport factors. Active directional transport is assured by both, a Phe-Gly (FG) repeat affinity gradient for these transport factors across the NPC and a transport cofactor concentration gradient across the nuclear envelope. Involved in the export of mRNA from the nucleus to the cytoplasm. May play a role in mitotic spindle formation and/or function. In Schizosaccharomyces pombe (strain 972 / ATCC 24843) (Fission yeast), this protein is mRNA export protein 33 (mep33).